We begin with the raw amino-acid sequence, 261 residues long: 14-3-3-like protein B (261 aa).

Positions 237-261 (DIPEDGEDSQKANGTAKFGGGDDAE) are disordered.

This sequence belongs to the 14-3-3 family.

The polypeptide is 14-3-3-like protein B (Vicia faba (Broad bean)).